The chain runs to 59 residues: Ribosome modulation factor (59 aa).

The protein belongs to the ribosome modulation factor family.

The protein localises to the cytoplasm. During stationary phase, converts 70S ribosomes to an inactive dimeric form (100S ribosomes). The protein is Ribosome modulation factor of Aeromonas veronii (strain B565).